Here is an 867-residue protein sequence, read N- to C-terminus: Envelope glycoprotein gp160 (867 aa).

Residues 1–31 (MRVKGIRKNYQHLWRWGTMLLGILMICSAAE) form the signal peptide. Residues 32–695 (QLWVTVYYGV…ITNWLWYIRI (664 aa)) lie on the Extracellular side of the membrane. An intrachain disulfide couples cysteine 53 to cysteine 73. N-linked (GlcNAc...) asparagine; by host glycans are attached at residues asparagine 87, asparagine 135, asparagine 140, asparagine 143, asparagine 159, asparagine 163, asparagine 188, asparagine 189, asparagine 199, asparagine 209, asparagine 246, asparagine 253, asparagine 274, asparagine 288, and asparagine 307. 5 disulfides stabilise this stretch: cysteine 118-cysteine 217, cysteine 125-cysteine 208, cysteine 130-cysteine 160, cysteine 230-cysteine 259, and cysteine 240-cysteine 251. The segment at 130–159 (CIDWGNDTSPNATNTTSSGGEKMEKGEMKN) is V1. The interval 160 to 208 (CSFNITTSIRDKVQKEHALFYKHDVVPINNSTKDNIKNDNSTRYRLISC) is V2. The interval 308 to 341 (CTRPSKTTRRRIHIGPGRAFYTTKQIAGDLRQAH) is V3. The cysteines at positions 308 and 342 are disulfide-linked. 3 N-linked (GlcNAc...) asparagine; by host glycosylation sites follow: asparagine 350, asparagine 366, and asparagine 372. Residues 374 to 384 (SSGGDPEIVMH) are CD4-binding loop. Disulfide bonds link cysteine 388-cysteine 457 and cysteine 395-cysteine 430. Residues 395–430 (CNSTQLFNSTWLSNSTWNDTEGSNNTGGNDTITLPC) are V4. N-linked (GlcNAc...) asparagine; by host glycans are attached at residues asparagine 396, asparagine 402, asparagine 408, asparagine 412, asparagine 418, asparagine 423, asparagine 460, and asparagine 475. 2 V5 regions span residues 473-483 (NQNETETFRPG) and 475-483 (NETETFRPG). The fusion peptide stretch occupies residues 524–544 (AVGIGAVFLGFLGAAGSTMGA). Positions 585–603 (KQLQARILAVERYLKDQQL) are immunosuppression. Cysteine 609 and cysteine 615 are joined by a disulfide. N-linked (GlcNAc...) asparagine; by host glycans are attached at residues asparagine 622, asparagine 627, asparagine 636, and asparagine 648. Positions 644–678 (REIDNYTSLIYTLIEESQNQQEKNEQELLGLDKWA) form a coiled coil. The segment at 673 to 694 (GLDKWASLWNWFTITNWLWYIR) is MPER; binding to GalCer. A helical transmembrane segment spans residues 696–716 (FIMIVGGLVGLRIVFTVLSIV). Residues 717 to 867 (NRVRQGYSPL…IRQGLERALL (151 aa)) lie on the Cytoplasmic side of the membrane. The YXXL motif; contains endocytosis signal motif lies at 723–726 (YSPL). The tract at residues 730–755 (TRLPAPRGPDRPEGIEEEGGDRDRDR) is disordered. Cysteine 775 carries S-palmitoyl cysteine; by host lipidation. Positions 866-867 (LL) match the Di-leucine internalization motif motif.

This sequence belongs to the HIV-1 env protein family. As to quaternary structure, the mature envelope protein (Env) consists of a homotrimer of non-covalently associated gp120-gp41 heterodimers. The resulting complex protrudes from the virus surface as a spike. There seems to be as few as 10 spikes on the average virion. Interacts with host CD4, CCR5 and CXCR4. Gp120 also interacts with the C-type lectins CD209/DC-SIGN and CLEC4M/DC-SIGNR (collectively referred to as DC-SIGN(R)). Gp120 and gp41 interact with GalCer. Gp120 interacts with host ITGA4/ITGB7 complex; on CD4+ T-cells, this interaction results in rapid activation of integrin ITGAL/LFA-1, which facilitates efficient cell-to-cell spreading of HIV-1. Gp120 interacts with cell-associated heparan sulfate; this interaction increases virus infectivity on permissive cells and may be involved in infection of CD4- cells. The mature envelope protein (Env) consists of a homotrimer of non-covalently associated gp120-gp41 heterodimers. The resulting complex protrudes from the virus surface as a spike. There seems to be as few as 10 spikes on the average virion. Post-translationally, highly glycosylated by host. The high number of glycan on the protein is reffered to as 'glycan shield' because it contributes to hide protein sequence from adaptive immune system. Palmitoylation of the transmembrane protein and of Env polyprotein (prior to its proteolytic cleavage) is essential for their association with host cell membrane lipid rafts. Palmitoylation is therefore required for envelope trafficking to classical lipid rafts, but not for viral replication. In terms of processing, specific enzymatic cleavages in vivo yield mature proteins. Envelope glycoproteins are synthesized as an inactive precursor that is heavily N-glycosylated and processed likely by host cell furin in the Golgi to yield the mature SU and TM proteins. The cleavage site between SU and TM requires the minimal sequence [KR]-X-[KR]-R. About 2 of the 9 disulfide bonds of gp41 are reduced by P4HB/PDI, following binding to CD4 receptor.

It localises to the virion membrane. The protein resides in the host cell membrane. Its subcellular location is the host endosome membrane. In terms of biological role, oligomerizes in the host endoplasmic reticulum into predominantly trimers. In a second time, gp160 transits in the host Golgi, where glycosylation is completed. The precursor is then proteolytically cleaved in the trans-Golgi and thereby activated by cellular furin or furin-like proteases to produce gp120 and gp41. Attaches the virus to the host lymphoid cell by binding to the primary receptor CD4. This interaction induces a structural rearrangement creating a high affinity binding site for a chemokine coreceptor like CXCR4 and/or CCR5. Acts as a ligand for CD209/DC-SIGN and CLEC4M/DC-SIGNR, which are respectively found on dendritic cells (DCs), and on endothelial cells of liver sinusoids and lymph node sinuses. These interactions allow capture of viral particles at mucosal surfaces by these cells and subsequent transmission to permissive cells. HIV subverts the migration properties of dendritic cells to gain access to CD4+ T-cells in lymph nodes. Virus transmission to permissive T-cells occurs either in trans (without DCs infection, through viral capture and transmission), or in cis (following DCs productive infection, through the usual CD4-gp120 interaction), thereby inducing a robust infection. In trans infection, bound virions remain infectious over days and it is proposed that they are not degraded, but protected in non-lysosomal acidic organelles within the DCs close to the cell membrane thus contributing to the viral infectious potential during DCs' migration from the periphery to the lymphoid tissues. On arrival at lymphoid tissues, intact virions recycle back to DCs' cell surface allowing virus transmission to CD4+ T-cells. Its function is as follows. Acts as a class I viral fusion protein. Under the current model, the protein has at least 3 conformational states: pre-fusion native state, pre-hairpin intermediate state, and post-fusion hairpin state. During fusion of viral and target intracellular membranes, the coiled coil regions (heptad repeats) assume a trimer-of-hairpins structure, positioning the fusion peptide in close proximity to the C-terminal region of the ectodomain. The formation of this structure appears to drive apposition and subsequent fusion of viral and target cell membranes. Complete fusion occurs in host cell endosomes and is dynamin-dependent, however some lipid transfer might occur at the plasma membrane. The virus undergoes clathrin-dependent internalization long before endosomal fusion, thus minimizing the surface exposure of conserved viral epitopes during fusion and reducing the efficacy of inhibitors targeting these epitopes. Membranes fusion leads to delivery of the nucleocapsid into the cytoplasm. The protein is Envelope glycoprotein gp160 of Homo sapiens (Human).